Reading from the N-terminus, the 97-residue chain is Small ribosomal subunit protein bS21 (97 aa).

Residues 37-97 (EKPSVRKARE…APASSPTTTA (61 aa)) form a disordered region. Over residues 76–97 (RAVAPRRPAAAPAPASSPTTTA) the composition is skewed to low complexity.

This sequence belongs to the bacterial ribosomal protein bS21 family.

The chain is Small ribosomal subunit protein bS21 from Methylobacterium sp. (strain 4-46).